Consider the following 657-residue polypeptide: ABC1 family protein YPL109C, mitochondrial (657 aa).

A mitochondrion-targeting transit peptide spans 1 to 15 (MSFLKFAYRNSWRYY).

The protein belongs to the protein kinase superfamily. ADCK protein kinase family.

The protein localises to the mitochondrion. The chain is ABC1 family protein YPL109C, mitochondrial from Saccharomyces cerevisiae (strain ATCC 204508 / S288c) (Baker's yeast).